The following is a 557-amino-acid chain: Formate--tetrahydrofolate ligase 2 (557 aa).

66–73 (TPAGEGKT) is an ATP binding site.

It belongs to the formate--tetrahydrofolate ligase family.

The catalysed reaction is (6S)-5,6,7,8-tetrahydrofolate + formate + ATP = (6R)-10-formyltetrahydrofolate + ADP + phosphate. It functions in the pathway one-carbon metabolism; tetrahydrofolate interconversion. In Streptococcus pyogenes serotype M5 (strain Manfredo), this protein is Formate--tetrahydrofolate ligase 2.